The following is a 364-amino-acid chain: Methylthioribose-1-phosphate isomerase (364 aa).

D254 (proton donor) is an active-site residue.

This sequence belongs to the eIF-2B alpha/beta/delta subunits family. MtnA subfamily.

It localises to the cytoplasm. It is found in the nucleus. It carries out the reaction 5-(methylsulfanyl)-alpha-D-ribose 1-phosphate = 5-(methylsulfanyl)-D-ribulose 1-phosphate. The protein operates within amino-acid biosynthesis; L-methionine biosynthesis via salvage pathway; L-methionine from S-methyl-5-thio-alpha-D-ribose 1-phosphate: step 1/6. Functionally, catalyzes the interconversion of methylthioribose-1-phosphate (MTR-1-P) into methylthioribulose-1-phosphate (MTRu-1-P). This chain is Methylthioribose-1-phosphate isomerase, found in Drosophila ananassae (Fruit fly).